A 451-amino-acid polypeptide reads, in one-letter code: MLSKFKRNKHQQHLAQLPKISQSVDDVDFFYAPADFRETLLEKIASAKQRICIVALYLEQDDGGKGILNALYEAKRQRPELDVRVLVDWHRAQRGRIGAAASNTNADWYCRMAQENPGVDVPVYGVPINTREALGVLHFKGFIIDDSVLYSGASLNDVYLHQHDKYRYDRYHLIRNRKMSDIMFEWVTQNIMNGRGVNRLDDVNRPKSPEIKNDIRLFRQELRDAAYHFQGDADNDQLSVTPLVGLGKSSLLNKTIFHLMPCAEQKLTICTPYFNLPAILVRNIIQLLREGKKVEIIVGDKTANDFYIPEDEPFKIIGALPYLYEINLRRFLSRLQYYVNTDQLVVRLWKDDDNTYHLKGMWVDDKWMLITGNNLNPRAWRLDLENAILIHDPQLELAPQREKELELIREHTTIVKHYRDLQSIADYPVKVRKLIRRLRRIRIDRLISRIL.

PLD phosphodiesterase domains follow at residues 27 to 224 (VDFF…ELRD) and 239 to 451 (SVTP…SRIL). Residues Leu-56, Tyr-57, Arg-91, Arg-94, Arg-96, Ile-97, Glu-132, Ala-133, Val-136, His-138, Lys-140, Gly-152, Tyr-159, and Arg-167 each contribute to the a CDP-1,2-diacyl-sn-glycerol site. His-138 is an active-site residue. Asp-169 is a catalytic residue. Residues Tyr-273, Asp-305, Phe-306, Ile-316, Ile-317, Leu-320, Leu-323, and Tyr-324 each contribute to the a CDP-1,2-diacyl-sn-glycerol site. His-357 is a catalytic residue. Positions 359, 374, and 378 each coordinate a CDP-1,2-diacyl-sn-glycerol. Glu-385 is a catalytic residue. The a CDP-1,2-diacyl-sn-glycerol site is built by Leu-438, Ile-447, Ile-450, and Leu-451.

It belongs to the CDP-alcohol phosphatidyltransferase class-II family. Multimeric. Interacts with ACP, YbgC and PlsB, forming altogether a complex at the inner membrane. Monomeric and dimeric; existing in equilibrium, but the monomer probably exhibits preferential membrane association.

Its subcellular location is the cytoplasm. The protein localises to the cell inner membrane. It catalyses the reaction a CDP-1,2-diacyl-sn-glycerol + L-serine = a 1,2-diacyl-sn-glycero-3-phospho-L-serine + CMP + H(+). It functions in the pathway phospholipid metabolism; phosphatidylethanolamine biosynthesis; phosphatidylethanolamine from CDP-diacylglycerol: step 1/2. In terms of biological role, catalyzes the conversion of cytidine diphosphate diacylglycerol (CDP-DG) and L-serine into phosphatidylserine. Essential for biosynthesis of phosphatidylethanolamine, one of the major membrane phospholipids. Phosphatidylserine is later converted into phosphatidylethanolamine via the action of phosphatidylserine decarboxylase psd. Associates with the bacterial membrane for its role, which depends on the levels of anionic phospholipids in the membrane. The protein is CDP-diacylglycerol--serine O-phosphatidyltransferase PssA (pssA) of Escherichia coli (strain K12).